We begin with the raw amino-acid sequence, 188 residues long: Elongation factor P (188 aa).

This sequence belongs to the elongation factor P family.

It localises to the cytoplasm. It functions in the pathway protein biosynthesis; polypeptide chain elongation. Functionally, involved in peptide bond synthesis. Stimulates efficient translation and peptide-bond synthesis on native or reconstituted 70S ribosomes in vitro. Probably functions indirectly by altering the affinity of the ribosome for aminoacyl-tRNA, thus increasing their reactivity as acceptors for peptidyl transferase. The sequence is that of Elongation factor P from Anaplasma phagocytophilum (strain HZ).